The primary structure comprises 132 residues: Pro-MCH 1 (132 aa).

The N-terminal stretch at 1–24 (MRDSVLSVIFALALFLECYTPSMA) is a signal peptide. Cysteines 120 and 129 form a disulfide.

It belongs to the MCH family. Pituitary gland. Produced in neurons of lateral basal hypothalamus which project both to the brain and to the neural lobe of the pituitary gland from where MCH is released.

In terms of biological role, plays a role in skin pigmentation by antagonizing the action of melanotropin alpha. Induces melanin concentration within the melanophores. May participate in the control of the hypothalamo-pituitary adrenal gland axis by inhibiting the release of ACTH. The chain is Pro-MCH 1 (mch1) from Oncorhynchus kisutch (Coho salmon).